The sequence spans 231 residues: Probable tetraspanin tspE (231 aa).

Over 1-21 the chain is Cytoplasmic; that stretch reads MTFVDNFEFNQNTPRLVRGPF. A helical membrane pass occupies residues 22–42; it reads IILNSIIFSLSFILLCSTGII. At 43-58 the chain is on the extracellular side; the sequence is IYYLNEYYLVKDLTIP. The helical transmembrane segment at 59-79 threads the bilayer; it reads LGSFILSAYMVITTIVGGIAI. Over 80–83 the chain is Cytoplasmic; sequence WKKK. Residues 84 to 104 form a helical membrane-spanning segment; that stretch reads LGLHLTFMVFLVVLIVCLVGV. At 105–195 the chain is on the extracellular side; that stretch reads SAKMIVDSGN…VESILKYLGY (91 aa). A helical transmembrane segment spans residues 196 to 216; the sequence is YGIVLSVIELILLILSGFFLL. Over 217–231 the chain is Cytoplasmic; that stretch reads KTNKNVKSKSFILQD.

Belongs to the tetraspanin (TM4SF) family.

It is found in the membrane. This chain is Probable tetraspanin tspE (tspE), found in Dictyostelium discoideum (Social amoeba).